The following is a 413-amino-acid chain: Histidine--tRNA ligase (413 aa).

Belongs to the class-II aminoacyl-tRNA synthetase family. Homodimer.

It localises to the cytoplasm. The catalysed reaction is tRNA(His) + L-histidine + ATP = L-histidyl-tRNA(His) + AMP + diphosphate + H(+). The chain is Histidine--tRNA ligase from Neorickettsia sennetsu (strain ATCC VR-367 / Miyayama) (Ehrlichia sennetsu).